Consider the following 383-residue polypeptide: Probable mannan endo-1,4-beta-mannosidase A (383 aa).

A signal peptide spans 1-21 (MKLSNALLTLASLALANVSTA). A glycan (N-linked (GlcNAc...) asparagine) is linked at asparagine 17. Tryptophan 92 is a substrate binding site. Asparagine 194 carries an N-linked (GlcNAc...) asparagine glycan. Asparagine 205 contributes to the substrate binding site. Glutamate 206 (proton donor) is an active-site residue. N-linked (GlcNAc...) asparagine glycosylation is present at asparagine 263. Tyrosine 281 is a substrate binding site. Glutamate 314 (nucleophile) is an active-site residue. Tryptophan 344 is a binding site for substrate.

Belongs to the glycosyl hydrolase 5 (cellulase A) family.

It localises to the secreted. It carries out the reaction Random hydrolysis of (1-&gt;4)-beta-D-mannosidic linkages in mannans, galactomannans and glucomannans.. Its function is as follows. Endo-1,4-mannanase, a crucial enzyme for depolymerization of seed galactomannans and wood galactoglucomannans. In Aspergillus niger (strain ATCC MYA-4892 / CBS 513.88 / FGSC A1513), this protein is Probable mannan endo-1,4-beta-mannosidase A (manA).